The following is a 105-amino-acid chain: Extracellular guanyl-specific ribonuclease Fl1 (105 aa).

2 disulfide bridges follow: C5–C101 and C23–C82. The active site involves H39. E57 serves as the catalytic Proton acceptor. H90 serves as the catalytic Proton donor.

Belongs to the ribonuclease N1/T1 family.

The enzyme catalyses [RNA] containing guanosine + H2O = an [RNA fragment]-3'-guanosine-3'-phosphate + a 5'-hydroxy-ribonucleotide-3'-[RNA fragment].. The polypeptide is Extracellular guanyl-specific ribonuclease Fl1 (Gibberella baccata (Fusarium lateritium)).